Consider the following 1412-residue polypeptide: Erbin (1412 aa).

LRR repeat units follow at residues 23–44 (TVTTLDYSHCSLEQVPKEIFTF), 47–68 (TLEELYLDANQIEELPKQLFNC), 70–91 (SLHKLSLPDNDLTTLPASIANL), 93–114 (NLRELDVSKNGIQEFPENIKNC), 116–137 (VLTIVEASVNPISKLPDGFSQL), 139–161 (NLTQLYLNDAFLEFLPANFGRLT), 162–183 (KLQILELRENQLKMLPKTMNRL), 185–206 (QLERLDLGSNEFTEVPEVLEQL), 208–229 (GLKEFWMDANRLTFIPGFIGSL), 231–252 (QLTYLDVSKNNIEMVEEGISTC), 254–275 (NLQDLLLSSNSLQQLPETIGSL), 277–298 (NITTLKIDENQLMYLPDSIGGL), 300–321 (SVEELDCSFNEVEALPSSIGQL), 323–344 (NLRTFAADHNYLQQLPPEIGSW), 346–367 (NITVLFLHSNKLETLPEEMGDM), 369–391 (KLKVINLSDNRLKNLPFSFTKLQ), and 392–413 (QLTAMWLSDNQSKPLIPLQKET). Residues Ser440 and Ser444 each carry the phosphoserine modification. Disordered regions lie at residues 464–489 (CDEDKDEREAPPREGNLKRYPTPYPD) and 506–542 (KDEETNEDSGRDLKPHEDQQDINKDVGVKTSESTTTV). Residues 470-480 (EREAPPREGNL) show a composition bias toward basic and acidic residues. Phosphotyrosine is present on Tyr483. Phosphothreonine is present on Thr485. Residues 506-532 (KDEETNEDSGRDLKPHEDQQDINKDVG) are compositionally biased toward basic and acidic residues. The span at 533-542 (VKTSESTTTV) shows a compositional bias: low complexity. Phosphoserine occurs at positions 569, 598, 602, 603, and 620. Positions 615–681 (PLIETSINQP…TDSSQDTSLC (67 aa)) are disordered. A compositionally biased stretch (basic and acidic residues) spans 632-641 (NKKDDTKETD). Over residues 650-662 (NSNQNNSNCSSPS) the composition is skewed to low complexity. Positions 663–681 (RMSDSVSLNTDSSQDTSLC) are enriched in polar residues. At Ser715 the chain carries Phosphoserine. Residues 803-867 (ETEHLENGNK…PQKSGPVGSV (65 aa)) form a disordered region. The segment covering 817–835 (ESVNKVNGHSEETSQSPNR) has biased composition (polar residues). 3 positions are modified to phosphoserine: Ser852, Ser857, and Ser872. The residue at position 917 (Thr917) is a Phosphothreonine. Tyr920 is subject to Phosphotyrosine. At Ser931 the chain carries Phosphoserine. Phosphotyrosine is present on Tyr972. 2 disordered regions span residues 997–1021 (NPQIDHASFPPQLLPRSESTENQSY) and 1075–1192 (QRQS…KSKV). Over residues 1075 to 1086 (QRQSSVSSTASV) the composition is skewed to polar residues. Tyr1104 bears the Phosphotyrosine mark. Over residues 1157 to 1171 (MSVSDFNYSRTSPSK) the composition is skewed to polar residues. Phosphoserine is present on residues Ser1158, Ser1179, and Ser1286. The PDZ domain maps to 1321–1410 (EIRVRVEKDP…TVELIIVREV (90 aa)).

Belongs to the LAP (LRR and PDZ) protein family. As to quaternary structure, interacts with ERBB2, BPAG1 and ITGB4. May favor the localization of ERBB2, by restricting its presence to the basolateral membrane of epithelial cells. Also found to interact with ARVCF and delta catenin. Interacts (via C-terminus) with DST Isoform 3 (via N-terminus). Interacts with NOD2 (via CARD domain). In terms of tissue distribution, highly expressed in brain, heart, kidney, muscle and stomach, followed by liver, spleen and intestine.

Its subcellular location is the cell junction. The protein resides in the hemidesmosome. It localises to the nucleus membrane. It is found in the basolateral cell membrane. Acts as an adapter for the receptor ERBB2, in epithelia. By binding the unphosphorylated 'Tyr-1248' of receptor ERBB2, it may contribute to stabilize this unphosphorylated state. Inhibits NOD2-dependent NF-kappa-B signaling and pro-inflammatory cytokine secretion. The protein is Erbin of Homo sapiens (Human).